The primary structure comprises 505 residues: Glycerol kinase (505 aa).

Thr12 contributes to the ADP binding site. Positions 12, 13, and 14 each coordinate ATP. A sn-glycerol 3-phosphate-binding site is contributed by Thr12. Residue Arg16 participates in ADP binding. Positions 82, 83, 134, and 246 each coordinate sn-glycerol 3-phosphate. The glycerol site is built by Arg82, Glu83, Tyr134, Asp246, and Gln247. ADP contacts are provided by Thr268 and Gly312. Positions 268, 312, 316, and 413 each coordinate ATP. Residues Gly413 and Asn417 each coordinate ADP.

The protein belongs to the FGGY kinase family.

It carries out the reaction glycerol + ATP = sn-glycerol 3-phosphate + ADP + H(+). Its pathway is polyol metabolism; glycerol degradation via glycerol kinase pathway; sn-glycerol 3-phosphate from glycerol: step 1/1. Inhibited by fructose 1,6-bisphosphate (FBP). In terms of biological role, key enzyme in the regulation of glycerol uptake and metabolism. Catalyzes the phosphorylation of glycerol to yield sn-glycerol 3-phosphate. This is Glycerol kinase from Beutenbergia cavernae (strain ATCC BAA-8 / DSM 12333 / CCUG 43141 / JCM 11478 / NBRC 16432 / NCIMB 13614 / HKI 0122).